The sequence spans 391 residues: MKCLILALICLQLSEGLVVRQILHKGKSIRERMEENGVLEDFLRYNKKADPAAKFLFNKDAVAYEPITNYLDSFYFGEISIGTPPQNFLVLFDTGSSNLWVPSTYCQSQACSNHNRFSPSQSSTFTNGGQTYTLSYGSGSLTVVLGYDTVTVQNIVVSNQEFGLSESEPTSPFYYSDFDGILGMAYPAMAVGNSPTVMQGMLQQGQLSEPIFSFYFSRQPTHQYGGELILGGVDPQLYSGQITWTPVTQEVYWQIGIEEFAIGNQATGWCSQGCQAIVDTGTFLLAVPQQYMSAFLQATGAQQAQNGDFMVNCNYIQDMPTITFVINGSQFPLPPSAYVFNNNGYCRLGIEATYLPSPNGQPLWILGDVFLKEYYSVYDMANNRVGFAYSA.

The signal sequence occupies residues 1–16 (MKCLILALICLQLSEG). Residues 17 to 60 (LVVRQILHKGKSIRERMEENGVLEDFLRYNKKADPAAKFLFNKD) constitute a propeptide, activation peptide. Positions 75-388 (YFGEISIGTP…DMANNRVGFA (314 aa)) constitute a Peptidase A1 domain. Residue D93 is part of the active site. 2 disulfide bridges follow: C106–C111 and C270–C274. The active site involves D279. C313 and C346 are joined by a disulfide.

This sequence belongs to the peptidase A1 family.

The protein localises to the secreted. The enzyme catalyses Degradation of gelatin, little activity on hemoglobin. Specificity on B chain of insulin more restricted than that of pepsin A. Does not cleave 1-Phe-|-Val-2, 4-Gln-|-His-5 or 23-Gly-|-Phe-24.. Functionally, hydrolyzes various peptides including beta-endorphin, insulin B chain, dynorphin A, and neurokinin A, with high specificity for the cleavage of the Phe-Xaa bonds. The protein is Pepsin B of Monodelphis domestica (Gray short-tailed opossum).